We begin with the raw amino-acid sequence, 186 residues long: Acireductone dioxygenase (186 aa).

The Fe(2+) site is built by His96, His98, Glu102, and His140. Ni(2+)-binding residues include His96, His98, Glu102, and His140.

Belongs to the acireductone dioxygenase (ARD) family. Monomer. Requires Fe(2+) as cofactor. Ni(2+) is required as a cofactor.

It carries out the reaction 1,2-dihydroxy-5-(methylsulfanyl)pent-1-en-3-one + O2 = 3-(methylsulfanyl)propanoate + CO + formate + 2 H(+). The catalysed reaction is 1,2-dihydroxy-5-(methylsulfanyl)pent-1-en-3-one + O2 = 4-methylsulfanyl-2-oxobutanoate + formate + 2 H(+). It functions in the pathway amino-acid biosynthesis; L-methionine biosynthesis via salvage pathway; L-methionine from S-methyl-5-thio-alpha-D-ribose 1-phosphate: step 5/6. Catalyzes 2 different reactions between oxygen and the acireductone 1,2-dihydroxy-3-keto-5-methylthiopentene (DHK-MTPene) depending upon the metal bound in the active site. Fe-containing acireductone dioxygenase (Fe-ARD) produces formate and 2-keto-4-methylthiobutyrate (KMTB), the alpha-ketoacid precursor of methionine in the methionine recycle pathway. Ni-containing acireductone dioxygenase (Ni-ARD) produces methylthiopropionate, carbon monoxide and formate, and does not lie on the methionine recycle pathway. This Methylococcus capsulatus (strain ATCC 33009 / NCIMB 11132 / Bath) protein is Acireductone dioxygenase.